The following is a 230-amino-acid chain: MSFKREGDDWSQLNVLKKRRVGDLLASYIPEDEALMLRDGRFACAICPHRPVLDTLAMLTAHRAGKKHLSSLQLFYGKKQPGKERKQNPKHQNELRREETKAEAPLLTQTRLITQSALHRAPHYNSCCRRKYRPEAPGPSVSLSPMPPSEVKLQSGKISREPEPAAGPQAEESATVSAPAPMSPTRRRALDHYLTLRSSGWIPDGRGRWVKDENVEFDSDEEEPPDLPLD.

Ser-2 is modified (phosphoserine). The Bipartite nuclear localization signal motif lies at 4 to 20; the sequence is KREGDDWSQLNVLKKRR. The Matrin-type zinc-finger motif lies at 42–74; sequence FACAICPHRPVLDTLAMLTAHRAGKKHLSSLQL. A Glycyl lysine isopeptide (Lys-Gly) (interchain with G-Cter in SUMO2) cross-link involves residue Lys-67. Disordered regions lie at residues 76 to 106, 129 to 186, and 200 to 230; these read YGKKQPGKERKQNPKHQNELRREETKAEAPL, RRKY…SPTR, and GWIPDGRGRWVKDENVEFDSDEEEPPDLPLD. The span at 81 to 102 shows a compositional bias: basic and acidic residues; the sequence is PGKERKQNPKHQNELRREETKA. Residue Ser-144 is modified to Phosphoserine. Low complexity predominate over residues 164 to 174; that stretch reads PAAGPQAEESA. Ser-183 carries the post-translational modification Phosphoserine. The segment at 188–230 is required for interaction with LUC7L2; the sequence is RALDHYLTLRSSGWIPDGRGRWVKDENVEFDSDEEEPPDLPLD. Residues 205 to 214 are compositionally biased toward basic and acidic residues; that stretch reads GRGRWVKDEN. A compositionally biased stretch (acidic residues) spans 215 to 230; sequence VEFDSDEEEPPDLPLD. The residue at position 219 (Ser-219) is a Phosphoserine.

Component of the minor spliceosome, which splices U12-type introns. Within this complex, interacts with RNF113A, as well as with SF3B1/SF3b155, SF3B2/SF3b145, SF3B3/SF3b130 and CDC5L. May interact with LUC7L2 and SNRNP70.

The protein localises to the nucleus. Its subcellular location is the nucleoplasm. It is found in the nucleus speckle. Functionally, as a component of the minor spliceosome, involved in the splicing of U12-type introns in pre-mRNAs. Plays a role in the regulation of primary cilia length and Hedgehog signaling. In Homo sapiens (Human), this protein is Sodium channel modifier 1 (SCNM1).